Reading from the N-terminus, the 198-residue chain is Na(+)-translocating NADH-quinone reductase subunit E (198 aa).

A run of 6 helical transmembrane segments spans residues 11–31 (SIFI…FLAV), 39–59 (MGLG…NNLI), 77–97 (FLSF…LEMA), 110–130 (GIFL…SFMV), 140–160 (VVYG…MAGI), and 176–196 (LGIT…FSGI).

It belongs to the NqrDE/RnfAE family. As to quaternary structure, composed of six subunits; NqrA, NqrB, NqrC, NqrD, NqrE and NqrF.

The protein resides in the cell inner membrane. It catalyses the reaction a ubiquinone + n Na(+)(in) + NADH + H(+) = a ubiquinol + n Na(+)(out) + NAD(+). NQR complex catalyzes the reduction of ubiquinone-1 to ubiquinol by two successive reactions, coupled with the transport of Na(+) ions from the cytoplasm to the periplasm. NqrA to NqrE are probably involved in the second step, the conversion of ubisemiquinone to ubiquinol. This Aeromonas hydrophila subsp. hydrophila (strain ATCC 7966 / DSM 30187 / BCRC 13018 / CCUG 14551 / JCM 1027 / KCTC 2358 / NCIMB 9240 / NCTC 8049) protein is Na(+)-translocating NADH-quinone reductase subunit E.